A 352-amino-acid polypeptide reads, in one-letter code: Protein RecA (352 aa).

67–74 (GPESSGKT) contributes to the ATP binding site. A disordered region spans residues 330 to 352 (STPKPEAESQEKAAAAQDDDSLV).

The protein belongs to the RecA family.

The protein localises to the cytoplasm. Can catalyze the hydrolysis of ATP in the presence of single-stranded DNA, the ATP-dependent uptake of single-stranded DNA by duplex DNA, and the ATP-dependent hybridization of homologous single-stranded DNAs. It interacts with LexA causing its activation and leading to its autocatalytic cleavage. The sequence is that of Protein RecA from Chromohalobacter salexigens (strain ATCC BAA-138 / DSM 3043 / CIP 106854 / NCIMB 13768 / 1H11).